A 2287-amino-acid polypeptide reads, in one-letter code: MKGHQFKSWIFELREIVREIKNSHYFLDSWTQFNSVGSFIHIFFHQERFRKLLDPRIFSILLLRNSQGSTSNRYFTIKGVVLFVVAALLYRINNRNMVESKNLYLKGLLPIPMNSIGPRNDTSEESFGSSNINRLIVSLLYLTKGKKISESCFRDPKESTWVLPITKKCIMPESNWSSRWWRNWIGKKRDFWCKISNETVAGIDISFKEKDIKYLEFLFVYYMDDPIRKGHDWELFDRLSPSKRRNIINLNSGQLFEILVKDWICYLMFAFREKIPIEVEGFFKQQGAGSTIQSNDIEHVSHLFSRNKWAISLQNCAQFHMWQFHQDLFVSWGKSPHESDFLRKISRENWIWLDNVWLVNKDRFFSKVRNVSSNIQYDSTRSSFVQVTDSSQLNGSSDQFIDPFDSISNEYSEYHYHTLINQREIQQLKERSILWDPSFIQTEGREIESDRFPKYLSGYSSMPRLFTEREKRMNNHLLPEESEEFLGNSTRAIRSFFSDRWSELHLGSNPTERSTRDQKLLKKEQDVSFVPSRRSENKEIVNIFKIITYLQNTVSIHPISSDLGCDMVPKDELDMDSSNKISFLNKNPFFDLFHLFHERKRGGYTLRHDFESEERFQEMADLFTLSITEPDLVYHKGFAFSIDSYGLDQRQFLKEVFNSRDESKKKSLLVLPPIFYEENESFYRRIRKNWVRISCGNYLEDPKRVVFASNNIMEAVNQYRLIRNLIQIQFQYSPYGYIRNVLNRFFLMKRPDRNFEYGIQRDLIGNDTLNHRMKDTINQHLSNLKKSQKKWFDPLIFLSRTERSINRDPNAYRYKWSNGSKNFQEHLEHFVSERKSRFQVVFDRLCINQYSIDWSEVIDKKDLSKSLRFFLSKLLRFFLSKLLLFLSKLLLFLSNSLPFFFVSFENIPIHRSEIHIYELKGPNDQLCNQLLESIGLQIVHLKKLKPFLLDDHNTSQKSKFLINGGTISPFLFNKIPKWMIDSFHTRKNRGKSFDNTDSYFSIVSHDQDNWLNPVKPFQRSSLISSFSKANRLRFLNNPHHFCFYCNKRFPFYVEKARLNNSDFTYGQFLTILFIHNKIFSSCGGKKKHEHAFLERDTISPSSIESQVSNIFISNDFPQSGDERYNLYKSFHFPIRSDPLVRRAIYSIADISGTPLIEGQRVNFERTYCQTLSDMNLSDSEEKSLHQYLNFNSNMGLIHTPCSEKYLQRKKRSLCLKKCVDKGQMDRTFQRDSAFSTLSKWNLFQTYMPWFFTSTGYKYLNLIFLDTFSDLLRILSSSQKFVSIFHDIMHGLDISWRILQKKLCLPQRNPISEISSKSLHNLLLSEEMIHRNNESSLISTHLRSPNVREVLYSILFLLLVAGYIVRTHLLFVSRAYSELQTEFEKIKSLMIPSYMIELRKLLDRYPTSELNSFWLKNLFLVALEQLGDCLEEIRGSGGNMLWGGDPARSKKKDLKINFIDIIDLISIIPNPINRITFSRNTRHLSHTSKEIYSLIRKRKNVSGDWIDDKIESWVANSDSIDDKEREFLVQFSTLRAEKRIDQILLSLTHSDHLSKNDSGYQMIEQPGTIYLRYLVDIHKKYLMNYEFNTSCLAERRIFLAHYQTITYSQTSCGANSFHFPSHGKPFSLRLALSPSRSILVIGSIGTGRSYLVKYLATNSYVPFITVFLNKFLDNKPKGFFIDDIDIDDSDDIDASNDIDRELDTELELLTMMNALTMDMMSEIDRFYITLQFELAKAMSPCIIWIPNIHDLDVNESNYLALGLLVNSLSRDCERCSTRNILVIASTHIPQKVDPALIAPNKLNTCIKIRRLLIPQQRKHFFTLSYTRGFHLEKKMFHTNGFESITMGSSARDLVALTNEALSISITQKKSIIDTNTIRSALHRQTWDLRSQVRSVQDHGILFYQIGRAVAQNVLISNCPIDPISIYMKKKSCNEGDSYLYKWYFELGTSMKKFTILLYLLSCSAGSVAQDLWSLPGPDEKNRITSYGFIENDSDLVHGLLEVQGALVGSSRTEKDCSQFDNDRVTLLFRSEPRDPLYMMQDGSCSIVDQRFLYEKYESEFEEGEGEGVLDPQQIEEDLFNHIVWAPRIWRPRGFLFDCIERPNELGFPYLAGSFRGKRIIYDEKYELQENDSEFLQSGTMQYQRRDRSSKEQGFFRISQFIWDPADPLFFLFKDQPFVSVFSHREFFADEEMSKGLLTSQTDPPTSIYKRWFIKNTQEKHFELLIQRQRWLRTNSSLSNGFFRSNTRSESYQYLSNLFLSNGTLLDRMTKTLLKKRWLFPDEMKIGFM.

ATP is bound at residue 1641-1648 (GSIGTGRS).

It belongs to the Ycf2 family.

The protein localises to the plastid. Its subcellular location is the chloroplast stroma. Probable ATPase of unknown function. Its presence in a non-photosynthetic plant (Epifagus virginiana) and experiments in tobacco indicate that it has an essential function which is probably not related to photosynthesis. In Lepidium virginicum (Virginia pepperweed), this protein is Protein Ycf2.